We begin with the raw amino-acid sequence, 113 residues long: Con-Ins G3b (113 aa).

Positions 1-21 (MTTSFYFLLVALGLLLYVCQS) are cleaved as a signal peptide. A propeptide spanning residues 22–29 (SFGNQHTR) is cleaved from the precursor. A 4-hydroxyproline; partial modification is found at P34. 3 cysteine pairs are disulfide-bonded: C38–C99, C50–C112, and C98–C103. E41 carries the post-translational modification 4-carboxyglutamate. H51 is subject to Histidine amide. Positions 52-92 (GKRNDAGKKRGRASPLWQRQGFLSMLKAKRNEAFFLQRDGR) are cleaved as a propeptide — c peptide. E96 is subject to 4-carboxyglutamate. P102 bears the 4-hydroxyproline; partial mark.

The protein belongs to the insulin family. As to quaternary structure, heterodimer of A and B chains; disulfide-linked. It is noteworthy that in this dimer, in contrast to Con-Ins G1, the chain B is amidated and not the chain A. Expressed by the venom gland.

It localises to the secreted. Its function is as follows. This venom insulin, from a fish-hunting cone snail, facilitates prey capture by rapidly inducing hypoglycemic shock. It is one of the smallest known insulin found in nature and lacks the C-terminal segment of the B chain that, in human insulin, mediates engagement of the insulin receptor (INSR) and assembly of the hormone's hexameric storage form. Despite lacking this segment, it both binds and activates human insulin receptor (long isoform (HIR-B)) with only a 10-fold lower potency. In vivo, intraperitoneal injection of this peptide into zebrafish lowers blood glucose with the same potency than human insulin. In addition, when applied to water, this peptide reduces overall locomotor activity of zebrafish larvae, observed as a significant decrease in the percentage of time spent swimming and movement frequency. The protein is Con-Ins G3b of Conus geographus (Geography cone).